The primary structure comprises 236 residues: Small ribosomal subunit protein uS3 (236 aa).

Residues 39–107 (VREFLKKSLS…PAQISITEIK (69 aa)) enclose the KH type-2 domain.

Belongs to the universal ribosomal protein uS3 family. As to quaternary structure, part of the 30S ribosomal subunit. Forms a tight complex with proteins S10 and S14.

In terms of biological role, binds the lower part of the 30S subunit head. Binds mRNA in the 70S ribosome, positioning it for translation. This chain is Small ribosomal subunit protein uS3, found in Wigglesworthia glossinidia brevipalpis.